The chain runs to 341 residues: Glyceraldehyde-3-phosphate dehydrogenase 1 (341 aa).

NAD(+)-binding positions include Arg-13–Ile-14, Asp-35, and Lys-85. Residues Ser-157–Thr-159, Thr-188, Thr-217–Gly-218, and Arg-240 contribute to the D-glyceraldehyde 3-phosphate site. Cys-158 acts as the Nucleophile in catalysis. Asn-322 is an NAD(+) binding site.

This sequence belongs to the glyceraldehyde-3-phosphate dehydrogenase family. In terms of assembly, homotetramer.

It localises to the cytoplasm. It carries out the reaction D-glyceraldehyde 3-phosphate + phosphate + NAD(+) = (2R)-3-phospho-glyceroyl phosphate + NADH + H(+). It functions in the pathway carbohydrate degradation; glycolysis; pyruvate from D-glyceraldehyde 3-phosphate: step 1/5. The sequence is that of Glyceraldehyde-3-phosphate dehydrogenase 1 (gpd-1) from Caenorhabditis elegans.